The primary structure comprises 152 residues: Putative aluminum-activated malate transporter 11 (152 aa).

2 helical membrane passes run 48 to 68 (VIHA…YFME) and 78 to 98 (AIWA…VEGL).

This sequence belongs to the aromatic acid exporter (TC 2.A.85) family.

It localises to the membrane. In terms of biological role, malate transporter. In Arabidopsis thaliana (Mouse-ear cress), this protein is Putative aluminum-activated malate transporter 11 (ALMT11).